A 372-amino-acid polypeptide reads, in one-letter code: 4-hydroxy-3-methylbut-2-en-1-yl diphosphate synthase (flavodoxin) (372 aa).

Residues C270, C273, C305, and E312 each coordinate [4Fe-4S] cluster.

It belongs to the IspG family. [4Fe-4S] cluster is required as a cofactor.

The enzyme catalyses (2E)-4-hydroxy-3-methylbut-2-enyl diphosphate + oxidized [flavodoxin] + H2O + 2 H(+) = 2-C-methyl-D-erythritol 2,4-cyclic diphosphate + reduced [flavodoxin]. The protein operates within isoprenoid biosynthesis; isopentenyl diphosphate biosynthesis via DXP pathway; isopentenyl diphosphate from 1-deoxy-D-xylulose 5-phosphate: step 5/6. Functionally, converts 2C-methyl-D-erythritol 2,4-cyclodiphosphate (ME-2,4cPP) into 1-hydroxy-2-methyl-2-(E)-butenyl 4-diphosphate. The sequence is that of 4-hydroxy-3-methylbut-2-en-1-yl diphosphate synthase (flavodoxin) from Enterobacter sp. (strain 638).